Consider the following 366-residue polypeptide: Heat-inducible transcription repressor HrcA (366 aa).

Positions 298–309 (SSGYGQSSTPSA) are enriched in polar residues. The disordered stretch occupies residues 298–318 (SSGYGQSSTPSANVEHEEYDT).

Belongs to the HrcA family.

Functionally, negative regulator of class I heat shock genes (grpE-dnaK-dnaJ and groELS operons). Prevents heat-shock induction of these operons. The sequence is that of Heat-inducible transcription repressor HrcA from Bifidobacterium animalis subsp. lactis (strain AD011).